A 514-amino-acid polypeptide reads, in one-letter code: 3-octaprenyl-4-hydroxybenzoate carboxy-lyase (514 aa).

Asparagine 177 is a Mn(2+) binding site. Prenylated FMN-binding positions include 180–182 (IYR), 194–196 (RWL), and 199–200 (RG). Residue glutamate 243 participates in Mn(2+) binding. The Proton donor role is filled by aspartate 314.

The protein belongs to the UbiD family. As to quaternary structure, homohexamer. It depends on prenylated FMN as a cofactor. Requires Mn(2+) as cofactor.

It localises to the cell membrane. It carries out the reaction a 4-hydroxy-3-(all-trans-polyprenyl)benzoate + H(+) = a 2-(all-trans-polyprenyl)phenol + CO2. It participates in cofactor biosynthesis; ubiquinone biosynthesis. In terms of biological role, catalyzes the decarboxylation of 3-octaprenyl-4-hydroxy benzoate to 2-octaprenylphenol, an intermediate step in ubiquinone biosynthesis. This Bordetella pertussis (strain Tohama I / ATCC BAA-589 / NCTC 13251) protein is 3-octaprenyl-4-hydroxybenzoate carboxy-lyase.